The chain runs to 178 residues: Crossover junction endodeoxyribonuclease RuvC (178 aa).

Catalysis depends on residues aspartate 11, glutamate 71, and aspartate 143. Residues aspartate 11, glutamate 71, and aspartate 143 each coordinate Mg(2+).

It belongs to the RuvC family. In terms of assembly, homodimer which binds Holliday junction (HJ) DNA. The HJ becomes 2-fold symmetrical on binding to RuvC with unstacked arms; it has a different conformation from HJ DNA in complex with RuvA. In the full resolvosome a probable DNA-RuvA(4)-RuvB(12)-RuvC(2) complex forms which resolves the HJ. It depends on Mg(2+) as a cofactor.

The protein localises to the cytoplasm. The catalysed reaction is Endonucleolytic cleavage at a junction such as a reciprocal single-stranded crossover between two homologous DNA duplexes (Holliday junction).. The RuvA-RuvB-RuvC complex processes Holliday junction (HJ) DNA during genetic recombination and DNA repair. Endonuclease that resolves HJ intermediates. Cleaves cruciform DNA by making single-stranded nicks across the HJ at symmetrical positions within the homologous arms, yielding a 5'-phosphate and a 3'-hydroxyl group; requires a central core of homology in the junction. The consensus cleavage sequence is 5'-(A/T)TT(C/G)-3'. Cleavage occurs on the 3'-side of the TT dinucleotide at the point of strand exchange. HJ branch migration catalyzed by RuvA-RuvB allows RuvC to scan DNA until it finds its consensus sequence, where it cleaves and resolves the cruciform DNA. This Neisseria meningitidis serogroup B (strain ATCC BAA-335 / MC58) protein is Crossover junction endodeoxyribonuclease RuvC.